The primary structure comprises 734 residues: Photosystem I P700 chlorophyll a apoprotein A2 (734 aa).

8 consecutive transmembrane segments (helical) span residues 46-69 (IFAS…FHVA), 135-158 (LYTG…LHLQ), 175-199 (LNHH…HVAI), 273-291 (IAHH…GHMY), 330-353 (LHFQ…QHMY), 369-395 (AALY…IFFI), 417-439 (AIIS…LYVH), and 517-535 (FLVH…SIPV). Residues cysteine 559 and cysteine 568 each contribute to the [4Fe-4S] cluster site. Helical transmembrane passes span 575–596 (AFYL…YWHW) and 643–665 (LSVW…MFLI). Residues histidine 654, methionine 662, and tyrosine 670 each contribute to the chlorophyll a site. Residue tryptophan 671 participates in phylloquinone binding. A helical transmembrane segment spans residues 707-727 (LVGLAHFSVGYIFTYAAFLIA).

It belongs to the PsaA/PsaB family. The PsaA/B heterodimer binds the P700 chlorophyll special pair and subsequent electron acceptors. PSI consists of a core antenna complex that captures photons, and an electron transfer chain that converts photonic excitation into a charge separation. The eukaryotic PSI reaction center is composed of at least 11 subunits. Requires P700 is a chlorophyll a/chlorophyll a' dimer, A0 is one or more chlorophyll a, A1 is one or both phylloquinones and FX is a shared 4Fe-4S iron-sulfur center. as cofactor.

The protein resides in the plastid. It is found in the chloroplast thylakoid membrane. It carries out the reaction reduced [plastocyanin] + hnu + oxidized [2Fe-2S]-[ferredoxin] = oxidized [plastocyanin] + reduced [2Fe-2S]-[ferredoxin]. In terms of biological role, psaA and PsaB bind P700, the primary electron donor of photosystem I (PSI), as well as the electron acceptors A0, A1 and FX. PSI is a plastocyanin-ferredoxin oxidoreductase, converting photonic excitation into a charge separation, which transfers an electron from the donor P700 chlorophyll pair to the spectroscopically characterized acceptors A0, A1, FX, FA and FB in turn. Oxidized P700 is reduced on the lumenal side of the thylakoid membrane by plastocyanin. This Angiopteris evecta (Mule's foot fern) protein is Photosystem I P700 chlorophyll a apoprotein A2.